The primary structure comprises 487 residues: Kynureninase 1 (487 aa).

Pyridoxal 5'-phosphate contacts are provided by residues L149, T150, 177–180, S234, D263, H266, and Y288; that span reads FPSD. K289 bears the N6-(pyridoxal phosphate)lysine mark. 2 residues coordinate pyridoxal 5'-phosphate: W329 and N357.

This sequence belongs to the kynureninase family. In terms of assembly, homodimer. The cofactor is pyridoxal 5'-phosphate.

The protein localises to the cytoplasm. The enzyme catalyses L-kynurenine + H2O = anthranilate + L-alanine + H(+). The catalysed reaction is 3-hydroxy-L-kynurenine + H2O = 3-hydroxyanthranilate + L-alanine + H(+). Its pathway is amino-acid degradation; L-kynurenine degradation; L-alanine and anthranilate from L-kynurenine: step 1/1. It functions in the pathway cofactor biosynthesis; NAD(+) biosynthesis; quinolinate from L-kynurenine: step 2/3. Catalyzes the cleavage of L-kynurenine (L-Kyn) and L-3-hydroxykynurenine (L-3OHKyn) into anthranilic acid (AA) and 3-hydroxyanthranilic acid (3-OHAA), respectively. In Emericella nidulans (strain FGSC A4 / ATCC 38163 / CBS 112.46 / NRRL 194 / M139) (Aspergillus nidulans), this protein is Kynureninase 1 (bna5-1).